We begin with the raw amino-acid sequence, 882 residues long: E3 ubiquitin-protein ligase SH3RF3 (882 aa).

Positions 18 to 42 (AQSEGDEDRPGERRRRRAAATAAGA) are disordered. Residues 57–98 (CSVCLERLDTTAKVLPCQHTFCRRCLESIVCSRHELRCPECR) form an RING-type zinc finger. Positions 124–159 (RPRAGTSPGGSPPARPIPGQSAAPTLAGGGGGAAGS) are disordered. 2 consecutive SH3 domains span residues 194–253 (CLLP…CIQP) and 256–319 (HAPP…LNDS). The segment at 368–399 (RRVDGKKNTKKRHSFTALSVTHRSSQAASHRH) is disordered. Residues 369–439 (RVDGKKNTKK…APTQDVSSSA (71 aa)) form an interaction with RAC1 region. Phosphoserine is present on serine 400. Over residues 433 to 444 (QDVSSSAGSTPT) the composition is skewed to polar residues. The tract at residues 433 to 458 (QDVSSSAGSTPTAVPRAASVSGEQGT) is disordered. Residues 464 to 525 (LPLNVYLALY…PGNYVTPVSR (62 aa)) form the SH3 3 domain. Composition is skewed to polar residues over residues 575–588 (PQAH…SPPT), 596–635 (AQPT…NSPS), and 697–706 (LSTSSPTNTG). Disordered regions lie at residues 575–664 (PQAH…CPRP) and 693–747 (PIGV…PTHD). Residues 708–721 (KLDEKKSEKKEKKS) are compositionally biased toward basic and acidic residues. Serine 797 is modified (phosphoserine). The SH3 4 domain maps to 823–882 (LPRERYRVVVSYPPQSEAEIELKEGDIVFVHKKREDGWYKGTLQRNGRTGLFPGSFVESF).

The protein belongs to the SH3RF family. As to quaternary structure, interacts (via SH3 domain 3) with PAK2. Interacts with RAC1 (GTP-bound form). In terms of processing, autoubiquitinated.

The catalysed reaction is S-ubiquitinyl-[E2 ubiquitin-conjugating enzyme]-L-cysteine + [acceptor protein]-L-lysine = [E2 ubiquitin-conjugating enzyme]-L-cysteine + N(6)-ubiquitinyl-[acceptor protein]-L-lysine.. It functions in the pathway protein modification; protein ubiquitination. Its function is as follows. Has E3 ubiquitin-protein ligase activity. The chain is E3 ubiquitin-protein ligase SH3RF3 (SH3RF3) from Homo sapiens (Human).